Here is a 227-residue protein sequence, read N- to C-terminus: Triosephosphate isomerase (227 aa).

6–8 (NLK) is a binding site for substrate. Residue H85 is the Electrophile of the active site. The Proton acceptor role is filled by E152. The substrate site is built by G158 and S188.

It belongs to the triosephosphate isomerase family. Homodimer.

It localises to the cytoplasm. The catalysed reaction is D-glyceraldehyde 3-phosphate = dihydroxyacetone phosphate. The protein operates within carbohydrate biosynthesis; gluconeogenesis. It participates in carbohydrate degradation; glycolysis; D-glyceraldehyde 3-phosphate from glycerone phosphate: step 1/1. Involved in the gluconeogenesis. Catalyzes stereospecifically the conversion of dihydroxyacetone phosphate (DHAP) to D-glyceraldehyde-3-phosphate (G3P). This Campylobacter concisus (strain 13826) protein is Triosephosphate isomerase.